A 795-amino-acid chain; its full sequence is Phenylalanine--tRNA ligase beta subunit (795 aa).

The 110-residue stretch at 39–148 folds into the tRNA-binding domain; the sequence is AGSFHGVVVG…ADAPIGTDIR (110 aa). The region spanning 401-476 is the B5 domain; that stretch reads PKRATITLRR…RVYGYNNIPD (76 aa). Mg(2+) contacts are provided by aspartate 454, aspartate 460, glutamate 463, and glutamate 464. The FDX-ACB domain maps to 701–794; that stretch reads SRFPANRRDI…LKERFQASLR (94 aa).

The protein belongs to the phenylalanyl-tRNA synthetase beta subunit family. Type 1 subfamily. As to quaternary structure, tetramer of two alpha and two beta subunits. Mg(2+) is required as a cofactor.

It is found in the cytoplasm. It catalyses the reaction tRNA(Phe) + L-phenylalanine + ATP = L-phenylalanyl-tRNA(Phe) + AMP + diphosphate + H(+). This chain is Phenylalanine--tRNA ligase beta subunit, found in Shigella boydii serotype 4 (strain Sb227).